Reading from the N-terminus, the 68-residue chain is Large ribosomal subunit protein uL29 (68 aa).

This sequence belongs to the universal ribosomal protein uL29 family.

This Chloroflexus aurantiacus (strain ATCC 29364 / DSM 637 / Y-400-fl) protein is Large ribosomal subunit protein uL29.